The primary structure comprises 238 residues: Uridylate kinase (238 aa).

An ATP-binding site is contributed by 12-15; that stretch reads KLSG. A UMP-binding site is contributed by G54. Positions 55 and 59 each coordinate ATP. UMP-binding positions include D74 and 135–142; that span reads TGNPFFTT. ATP-binding residues include T162, N163, Y168, and D171.

It belongs to the UMP kinase family. As to quaternary structure, homohexamer.

It is found in the cytoplasm. It carries out the reaction UMP + ATP = UDP + ADP. The protein operates within pyrimidine metabolism; CTP biosynthesis via de novo pathway; UDP from UMP (UMPK route): step 1/1. With respect to regulation, inhibited by UTP. In terms of biological role, catalyzes the reversible phosphorylation of UMP to UDP. The polypeptide is Uridylate kinase (Rhodopseudomonas palustris (strain HaA2)).